Consider the following 328-residue polypeptide: tRNA dimethylallyltransferase (328 aa).

An ATP-binding site is contributed by 10 to 17 (GPTASGKT). 12-17 (TASGKT) serves as a coordination point for substrate.

This sequence belongs to the IPP transferase family. As to quaternary structure, monomer. Mg(2+) is required as a cofactor.

The enzyme catalyses adenosine(37) in tRNA + dimethylallyl diphosphate = N(6)-dimethylallyladenosine(37) in tRNA + diphosphate. Its function is as follows. Catalyzes the transfer of a dimethylallyl group onto the adenine at position 37 in tRNAs that read codons beginning with uridine, leading to the formation of N6-(dimethylallyl)adenosine (i(6)A). This Bifidobacterium longum subsp. infantis (strain ATCC 15697 / DSM 20088 / JCM 1222 / NCTC 11817 / S12) protein is tRNA dimethylallyltransferase.